We begin with the raw amino-acid sequence, 261 residues long: Imidazole glycerol phosphate synthase subunit HisF (261 aa).

Catalysis depends on residues D11 and D130.

It belongs to the HisA/HisF family. As to quaternary structure, heterodimer of HisH and HisF.

The protein resides in the cytoplasm. It catalyses the reaction 5-[(5-phospho-1-deoxy-D-ribulos-1-ylimino)methylamino]-1-(5-phospho-beta-D-ribosyl)imidazole-4-carboxamide + L-glutamine = D-erythro-1-(imidazol-4-yl)glycerol 3-phosphate + 5-amino-1-(5-phospho-beta-D-ribosyl)imidazole-4-carboxamide + L-glutamate + H(+). It participates in amino-acid biosynthesis; L-histidine biosynthesis; L-histidine from 5-phospho-alpha-D-ribose 1-diphosphate: step 5/9. In terms of biological role, IGPS catalyzes the conversion of PRFAR and glutamine to IGP, AICAR and glutamate. The HisF subunit catalyzes the cyclization activity that produces IGP and AICAR from PRFAR using the ammonia provided by the HisH subunit. The chain is Imidazole glycerol phosphate synthase subunit HisF from Jannaschia sp. (strain CCS1).